Consider the following 274-residue polypeptide: Undecaprenyl-diphosphatase 1 (274 aa).

8 helical membrane-spanning segments follow: residues 4–24, 45–65, 84–104, 111–131, 146–166, 186–206, 217–237, and 249–269; these read LLLL…FLPI, SAVF…YEYW, HLAI…LSFG, LFND…IMWI, IGLK…IPGT, ATEF…LLDL, FDWS…LLLI, and FMVF…FAYT.

It belongs to the UppP family.

It localises to the cell inner membrane. It catalyses the reaction di-trans,octa-cis-undecaprenyl diphosphate + H2O = di-trans,octa-cis-undecaprenyl phosphate + phosphate + H(+). Functionally, catalyzes the dephosphorylation of undecaprenyl diphosphate (UPP). Confers resistance to bacitracin. The polypeptide is Undecaprenyl-diphosphatase 1 (Acinetobacter baylyi (strain ATCC 33305 / BD413 / ADP1)).